We begin with the raw amino-acid sequence, 1077 residues long: Tudor domain-containing protein 7 (1077 aa).

HTH OST-type domains are found at residues 1–67 (MLRA…YAVV) and 220–289 (DLSV…LYST). The segment covering 300-328 (VQNHSNNQAKPNVPVDSTPSSPPLQSSGN) has biased composition (polar residues). Residues 300-331 (VQNHSNNQAKPNVPVDSTPSSPPLQSSGNIPK) form a disordered region. The HTH OST-type 3 domain maps to 330-398 (PKDELKQKIS…PFKAILYAKS (69 aa)). Tudor domains are found at residues 494-551 (FLRV…FYTL) and 684-741 (LPFC…LLRD). The tract at residues 841-883 (SRGGGAQASELSPPGLCKDHTSAVKKPDMQQSSSVPSFNMPPP) is disordered. Positions 857–868 (CKDHTSAVKKPD) are enriched in basic and acidic residues.

It belongs to the TDRD7 family.

The protein localises to the cytoplasm. In terms of biological role, component of specific cytoplasmic RNA granules involved in post-transcriptional regulation of specific genes: probably acts by binding to specific mRNAs and regulating their translation. Probably required during spermatogenesis. This chain is Tudor domain-containing protein 7 (tdrd7), found in Xenopus tropicalis (Western clawed frog).